The primary structure comprises 750 residues: NAD(P)H-quinone oxidoreductase subunit 5, chloroplastic (750 aa).

Transmembrane regions (helical) follow at residues 9 to 29 (WIIP…LLLF), 40 to 60 (WAFT…NLSI), 89 to 109 (IDPL…MVLI), 125 to 145 (FAYM…SNLI), 147 to 167 (IYIF…FWFT), 185 to 205 (GDFG…SFEF), 230 to 250 (AALL…HIWL), 258 to 278 (TPIS…FLVA), 283 to 303 (LFIV…ITVL), 327 to 347 (LGYM…FHLI), 354 to 374 (ALLF…VGYS), 396 to 416 (TSFL…CFWS), 425 to 445 (WLYS…TAFY), 548 to 568 (LFPL…GIPF), 607 to 627 (IFSV…YKPI), and 724 to 744 (LFFY…FYLF).

It belongs to the complex I subunit 5 family. In terms of assembly, NDH is composed of at least 16 different subunits, 5 of which are encoded in the nucleus.

It is found in the plastid. It localises to the chloroplast thylakoid membrane. The catalysed reaction is a plastoquinone + NADH + (n+1) H(+)(in) = a plastoquinol + NAD(+) + n H(+)(out). The enzyme catalyses a plastoquinone + NADPH + (n+1) H(+)(in) = a plastoquinol + NADP(+) + n H(+)(out). Functionally, NDH shuttles electrons from NAD(P)H:plastoquinone, via FMN and iron-sulfur (Fe-S) centers, to quinones in the photosynthetic chain and possibly in a chloroplast respiratory chain. The immediate electron acceptor for the enzyme in this species is believed to be plastoquinone. Couples the redox reaction to proton translocation, and thus conserves the redox energy in a proton gradient. In Tecoma stans (Yellow bells), this protein is NAD(P)H-quinone oxidoreductase subunit 5, chloroplastic (ndhF).